The sequence spans 446 residues: Protein adenylyltransferase FICD (446 aa).

Over 1–18 (MAVTECEWASLGSRIGLR) the chain is Cytoplasmic. The helical; Signal-anchor for type II membrane protein transmembrane segment at 19 to 39 (AALVLLSGSLLVVLFPLSGLE) threads the bilayer. Residues 40–446 (HQYRTALNIL…ECKQTITIKT (407 aa)) are Lumenal-facing. TPR repeat units lie at residues 94-127 (AKAALNQALEMKRQGKKEKAHKLLHHALKMDPDH) and 128-161 (VDALNELGILLEEEKDIIQADYLYSKALTISPHN). The Inhibitory (S/T)XXXE(G/N) motif motif lies at 218–223 (TVAIEG). Glu-222 contacts ATP. N-linked (GlcNAc...) asparagine glycosylation occurs at Asn-263. Residues 273–408 (VTIDNILEIH…VRPFIRFIAK (136 aa)) enclose the Fido domain. 304-307 (VGHH) is a binding site for ATP. His-351 is a catalytic residue. Residues 355 to 362 (DGNGRTSR), 387 to 388 (YY), and Asn-395 contribute to the ATP site.

This sequence belongs to the fic family. Homodimer. The cofactor is Mg(2+). Mn(2+) serves as cofactor.

It localises to the endoplasmic reticulum membrane. The catalysed reaction is L-tyrosyl-[protein] + ATP = O-(5'-adenylyl)-L-tyrosyl-[protein] + diphosphate. It carries out the reaction 3-O-(5'-adenylyl)-L-threonyl-[protein] + H2O = L-threonyl-[protein] + AMP + H(+). It catalyses the reaction L-threonyl-[protein] + ATP = 3-O-(5'-adenylyl)-L-threonyl-[protein] + diphosphate. Its activity is regulated as follows. The side chain of Glu-222 determines which of the two opposing activities (AMPylase or de-AMPylase) will take place. In response to endoplasmic reticulum stress, mediates de-AMPylase activity. Adenylyltransferase activity is inhibited by the inhibitory helix present at the N-terminus: Glu-222 binds ATP and competes with ATP-binding at Arg-362, thereby preventing adenylyltransferase activity. In unstressed cells, disengagement of Glu-222 promotes adenylyltransferase activity. Activation dissociates ATP-binding from Glu-222, allowing ordered binding of the entire ATP moiety with the alpha-phosphate in an orientation that is productive for accepting an incoming target hydroxyl side chain. In terms of biological role, protein that can both mediate the addition of adenosine 5'-monophosphate (AMP) to specific residues of target proteins (AMPylation), and the removal of the same modification from target proteins (de-AMPylation), depending on the context. The side chain of Glu-222 determines which of the two opposing activities (AMPylase or de-AMPylase) will take place. Acts as a key regulator of the ERN1/IRE1-mediated unfolded protein response (UPR) by mediating AMPylation or de-AMPylation of HSPA5/BiP. In unstressed cells, acts as an adenylyltransferase by mediating AMPylation of HSPA5/BiP at 'Thr-518', thereby inactivating it. In response to endoplasmic reticulum stress, acts as a phosphodiesterase by mediating removal of ATP (de-AMPylation) from HSPA5/BiP at 'Thr-518', leading to restore HSPA5/BiP activity. The polypeptide is Protein adenylyltransferase FICD (Xenopus tropicalis (Western clawed frog)).